Reading from the N-terminus, the 474-residue chain is Bifunctional protein HldE (474 aa).

Residues 1 to 318 are ribokinase; it reads MKLSMPRFDQ…RAIQREEGSE (318 aa). 194-197 contributes to the ATP binding site; the sequence is NLSE. Residue D263 is part of the active site. A cytidylyltransferase region spans residues 343 to 474; the sequence is FTNGCFDILH…AIVEKIRKSE (132 aa).

In the N-terminal section; belongs to the carbohydrate kinase PfkB family. This sequence in the C-terminal section; belongs to the cytidylyltransferase family. As to quaternary structure, homodimer.

It carries out the reaction D-glycero-beta-D-manno-heptose 7-phosphate + ATP = D-glycero-beta-D-manno-heptose 1,7-bisphosphate + ADP + H(+). It catalyses the reaction D-glycero-beta-D-manno-heptose 1-phosphate + ATP + H(+) = ADP-D-glycero-beta-D-manno-heptose + diphosphate. It functions in the pathway nucleotide-sugar biosynthesis; ADP-L-glycero-beta-D-manno-heptose biosynthesis; ADP-L-glycero-beta-D-manno-heptose from D-glycero-beta-D-manno-heptose 7-phosphate: step 1/4. Its pathway is nucleotide-sugar biosynthesis; ADP-L-glycero-beta-D-manno-heptose biosynthesis; ADP-L-glycero-beta-D-manno-heptose from D-glycero-beta-D-manno-heptose 7-phosphate: step 3/4. Functionally, catalyzes the phosphorylation of D-glycero-D-manno-heptose 7-phosphate at the C-1 position to selectively form D-glycero-beta-D-manno-heptose-1,7-bisphosphate. In terms of biological role, catalyzes the ADP transfer from ATP to D-glycero-beta-D-manno-heptose 1-phosphate, yielding ADP-D-glycero-beta-D-manno-heptose. This chain is Bifunctional protein HldE, found in Pseudomonas fluorescens (strain Pf0-1).